We begin with the raw amino-acid sequence, 448 residues long: Probable glycine dehydrogenase (decarboxylating) subunit 1 (448 aa).

Belongs to the GcvP family. N-terminal subunit subfamily. The glycine cleavage system is composed of four proteins: P, T, L and H. In this organism, the P 'protein' is a heterodimer of two subunits.

It catalyses the reaction N(6)-[(R)-lipoyl]-L-lysyl-[glycine-cleavage complex H protein] + glycine + H(+) = N(6)-[(R)-S(8)-aminomethyldihydrolipoyl]-L-lysyl-[glycine-cleavage complex H protein] + CO2. Its function is as follows. The glycine cleavage system catalyzes the degradation of glycine. The P protein binds the alpha-amino group of glycine through its pyridoxal phosphate cofactor; CO(2) is released and the remaining methylamine moiety is then transferred to the lipoamide cofactor of the H protein. The chain is Probable glycine dehydrogenase (decarboxylating) subunit 1 from Listeria innocua serovar 6a (strain ATCC BAA-680 / CLIP 11262).